The following is a 418-amino-acid chain: MGKTMAEKILSRASGEDAEAGDIVVANIDVAMVHDITGPITVQRLEEMGVERVWDPSKIVVLFDHQVPADSVEAAENHKIMREFVEEQGIEHFYDVREGVCHQVLPEKGHVRPGDVIVGADSHTCTHGALGAFATGIGSTDMAAVFATGKLWFRVPETYRVEITGELPEGVYAKDVVLKVTGEIGADGATYMAIEYHGEVVREMSVSDRMCLCNMAIEMGAKTGMVPPDEKTLEYVKKRAGTEGRPVEPDPDARYEAELTLDVSDLEPQVAKPFSPDNVVPVGEVEGIAIDQVFIGSCTNGRYEDLKVAAEVLEGEEVHDDVRLIVIPASREVYHRTLKDGVLEVLHEAGALICPPNCGPCLGGHMGVLAEGERCVATSNRNFPGRMGHRESEVYLASPATAAASAIEGEITDPRPYL.

The [4Fe-4S] cluster site is built by Cys298, Cys358, and Cys361.

The protein belongs to the aconitase/IPM isomerase family. LeuC type 2 subfamily. In terms of assembly, heterodimer of LeuC and LeuD. The cofactor is [4Fe-4S] cluster.

The catalysed reaction is (2R,3S)-3-isopropylmalate = (2S)-2-isopropylmalate. The protein operates within amino-acid biosynthesis; L-leucine biosynthesis; L-leucine from 3-methyl-2-oxobutanoate: step 2/4. Catalyzes the isomerization between 2-isopropylmalate and 3-isopropylmalate, via the formation of 2-isopropylmaleate. The chain is 3-isopropylmalate dehydratase large subunit 1 from Methanopyrus kandleri (strain AV19 / DSM 6324 / JCM 9639 / NBRC 100938).